Reading from the N-terminus, the 436-residue chain is Probable 4-aminobutyrate aminotransferase (436 aa).

At K281 the chain carries N6-(pyridoxal phosphate)lysine.

The protein belongs to the class-III pyridoxal-phosphate-dependent aminotransferase family. Pyridoxal 5'-phosphate serves as cofactor.

It carries out the reaction 4-aminobutanoate + 2-oxoglutarate = succinate semialdehyde + L-glutamate. It catalyses the reaction (S)-3-amino-2-methylpropanoate + 2-oxoglutarate = 2-methyl-3-oxopropanoate + L-glutamate. Its pathway is amino-acid degradation; 4-aminobutanoate degradation. The polypeptide is Probable 4-aminobutyrate aminotransferase (gabT) (Bacillus subtilis (strain 168)).